Here is a 344-residue protein sequence, read N- to C-terminus: MDTITLLQPDDWHAHLRDGLALKRTVPDLAQQFARAICMPNLVPPVKTVDEAEAYRERIMAHVPEGVHFDPRMVLYFTDHTSPSEVKKIKDSAHVNAIKLYPAGATTNSDNGVSDIRKVYAVIEQLEEHQVPLLLHGEVTHHHVDIFDREKRFLDEVLSPLLKQFPKLKLVLEHITTSEAAHFVLEQDRNVAATITPQHLLFNRNDMLVGGIKPHFYCLPILKRQTHQQTLIEVATSGNPKFFLGTDSAPHSKNAKENACGCAGCYSAPTAIELYAQAFDQVNKIERLEGFASHFGADFYGLPRNTNTITLVKEDQIIPEQLDYLDDEKIIPLYAGKTIQWRKV.

H13 and H15 together coordinate Zn(2+). Substrate contacts are provided by residues 15–17 (HLR) and N41. K99, H136, and H174 together coordinate Zn(2+). Position 99 is an N6-carboxylysine (K99). H136 lines the substrate pocket. L219 is a binding site for substrate. D247 lines the Zn(2+) pocket. D247 is a catalytic residue. Substrate is bound by residues H251 and A263.

This sequence belongs to the metallo-dependent hydrolases superfamily. DHOase family. Class II DHOase subfamily. Homodimer. Requires Zn(2+) as cofactor.

The enzyme catalyses (S)-dihydroorotate + H2O = N-carbamoyl-L-aspartate + H(+). Its pathway is pyrimidine metabolism; UMP biosynthesis via de novo pathway; (S)-dihydroorotate from bicarbonate: step 3/3. In terms of biological role, catalyzes the reversible cyclization of carbamoyl aspartate to dihydroorotate. This chain is Dihydroorotase, found in Acinetobacter baylyi (strain ATCC 33305 / BD413 / ADP1).